A 144-amino-acid polypeptide reads, in one-letter code: 3-hydroxyacyl-[acyl-carrier-protein] dehydratase FabZ (144 aa).

Histidine 48 is an active-site residue.

Belongs to the thioester dehydratase family. FabZ subfamily.

The protein resides in the cytoplasm. The enzyme catalyses a (3R)-hydroxyacyl-[ACP] = a (2E)-enoyl-[ACP] + H2O. Its function is as follows. Involved in unsaturated fatty acids biosynthesis. Catalyzes the dehydration of short chain beta-hydroxyacyl-ACPs and long chain saturated and unsaturated beta-hydroxyacyl-ACPs. The sequence is that of 3-hydroxyacyl-[acyl-carrier-protein] dehydratase FabZ from Bacillus thuringiensis (strain Al Hakam).